A 350-amino-acid chain; its full sequence is tRNA uridine(34) hydroxylase (350 aa).

One can recognise a Rhodanese domain in the interval 146 to 240; that stretch reads DDPDALFIDM…YARKAREQGL (95 aa). C200 serves as the catalytic Cysteine persulfide intermediate.

It belongs to the TrhO family.

The catalysed reaction is uridine(34) in tRNA + AH2 + O2 = 5-hydroxyuridine(34) in tRNA + A + H2O. Functionally, catalyzes oxygen-dependent 5-hydroxyuridine (ho5U) modification at position 34 in tRNAs. The polypeptide is tRNA uridine(34) hydroxylase (Escherichia fergusonii (strain ATCC 35469 / DSM 13698 / CCUG 18766 / IAM 14443 / JCM 21226 / LMG 7866 / NBRC 102419 / NCTC 12128 / CDC 0568-73)).